The chain runs to 264 residues: DNA repair protein RecO (264 aa).

The protein belongs to the RecO family.

Its function is as follows. Involved in DNA repair and RecF pathway recombination. The chain is DNA repair protein RecO from Prosthecochloris aestuarii (strain DSM 271 / SK 413).